The following is a 300-amino-acid chain: NAD kinase (300 aa).

Catalysis depends on aspartate 77, which acts as the Proton acceptor. NAD(+)-binding positions include 77–78 (DG), 151–152 (ND), histidine 162, arginine 179, aspartate 181, and 192–197 (TAYSLS).

This sequence belongs to the NAD kinase family. It depends on a divalent metal cation as a cofactor.

The protein resides in the cytoplasm. The catalysed reaction is NAD(+) + ATP = ADP + NADP(+) + H(+). In terms of biological role, involved in the regulation of the intracellular balance of NAD and NADP, and is a key enzyme in the biosynthesis of NADP. Catalyzes specifically the phosphorylation on 2'-hydroxyl of the adenosine moiety of NAD to yield NADP. In Cellvibrio japonicus (strain Ueda107) (Pseudomonas fluorescens subsp. cellulosa), this protein is NAD kinase.